We begin with the raw amino-acid sequence, 147 residues long: 2-amino-4-hydroxy-6-hydroxymethyldihydropteridine pyrophosphokinase (147 aa).

Belongs to the HPPK family.

It carries out the reaction 6-hydroxymethyl-7,8-dihydropterin + ATP = (7,8-dihydropterin-6-yl)methyl diphosphate + AMP + H(+). Its pathway is cofactor biosynthesis; tetrahydrofolate biosynthesis; 2-amino-4-hydroxy-6-hydroxymethyl-7,8-dihydropteridine diphosphate from 7,8-dihydroneopterin triphosphate: step 4/4. Functionally, catalyzes the transfer of pyrophosphate from adenosine triphosphate (ATP) to 6-hydroxymethyl-7,8-dihydropterin, an enzymatic step in folate biosynthesis pathway. The polypeptide is 2-amino-4-hydroxy-6-hydroxymethyldihydropteridine pyrophosphokinase (folK) (Porphyromonas gingivalis (strain ATCC 33277 / DSM 20709 / CIP 103683 / JCM 12257 / NCTC 11834 / 2561)).